Consider the following 333-residue polypeptide: Probable siderophore transport system permease protein YfiZ (333 aa).

Positions Met-1 to Gly-31 are cleaved as a signal peptide. 8 helical membrane-spanning segments follow: residues Ala-64–Leu-84, Ile-94–Ile-114, Ala-119–Gly-139, Thr-152–Val-172, Leu-193–Leu-213, Val-246–Ile-266, Trp-280–Ala-300, and Ile-303–Phe-323.

Belongs to the binding-protein-dependent transport system permease family. FecCD subfamily. As to quaternary structure, the complex is composed of one ATP-binding protein (YusV), two transmembrane proteins (YfiZ and YfhA) and a solute-binding protein (YfiY).

Its subcellular location is the cell membrane. In terms of biological role, part of the ABC transporter complex YfiYZ/YfhA/YusV involved in import of the iron-hydroxamate siderophores schizokinen, arthrobactin and corprogen. The protein is Probable siderophore transport system permease protein YfiZ (yfiZ) of Bacillus subtilis (strain 168).